The primary structure comprises 824 residues: Glycerol-3-phosphate acyltransferase (824 aa).

Positions 302-307 (CHRSHM) match the HXXXXD motif motif.

It belongs to the GPAT/DAPAT family.

The protein resides in the cell inner membrane. The enzyme catalyses sn-glycerol 3-phosphate + an acyl-CoA = a 1-acyl-sn-glycero-3-phosphate + CoA. The protein operates within phospholipid metabolism; CDP-diacylglycerol biosynthesis; CDP-diacylglycerol from sn-glycerol 3-phosphate: step 1/3. The polypeptide is Glycerol-3-phosphate acyltransferase (Actinobacillus pleuropneumoniae serotype 7 (strain AP76)).